A 35-amino-acid polypeptide reads, in one-letter code: MSDINATRLPIWGIGCNPCVGDDVTTLLTRGEALC.

Residues 1 to 10 (MSDINATRLP) constitute a propeptide that is removed on maturation. Ile11 bears the (3R,4R)-4,5-dihydroxyisoleucine; in form alpha-amanitin mark. Residue Ile11 is modified to (3R,4S)-4-hydroxyisoleucine; in form gamma-amanitin. A cross-link (cyclopeptide (Ile-Pro)) is located at residues 11-18 (IWGIGCNP). Positions 12-16 (WGIGC) form a cross-link, 2'-cysteinyl-6'-hydroxytryptophan sulfoxide (Trp-Cys). Pro18 is subject to 4-hydroxyproline. Residues 19–35 (CVGDDVTTLLTRGEALC) constitute a propeptide that is removed on maturation.

It belongs to the MSDIN fungal toxin family. Processed by the macrocyclase-peptidase enzyme POPB to yield a toxic cyclic decapeptide. POPB first removes 10 residues from the N-terminus. Conformational trapping of the remaining peptide forces the enzyme to release this intermediate rather than proceed to macrocyclization. The enzyme rebinds the remaining peptide in a different conformation and catalyzes macrocyclization of the N-terminal 8 residues.

Its function is as follows. Major toxin belonging to the bicyclic octapeptides amatoxins that acts by binding non-competitively to RNA polymerase II and greatly slowing the elongation of transcripts from target promoters. The sequence is that of Alpha-amanitin proprotein from Amanita bisporigera (Destroying angel).